The following is a 133-amino-acid chain: Ribosome-binding factor A (133 aa).

This sequence belongs to the RbfA family. As to quaternary structure, monomer. Binds 30S ribosomal subunits, but not 50S ribosomal subunits or 70S ribosomes.

It is found in the cytoplasm. Functionally, one of several proteins that assist in the late maturation steps of the functional core of the 30S ribosomal subunit. Associates with free 30S ribosomal subunits (but not with 30S subunits that are part of 70S ribosomes or polysomes). Required for efficient processing of 16S rRNA. May interact with the 5'-terminal helix region of 16S rRNA. In Trichormus variabilis (strain ATCC 29413 / PCC 7937) (Anabaena variabilis), this protein is Ribosome-binding factor A.